The following is a 332-amino-acid chain: Ferredoxin--NADP reductase (332 aa).

FAD is bound by residues glutamate 36, glutamine 44, tyrosine 49, valine 91, phenylalanine 124, and threonine 327.

It belongs to the ferredoxin--NADP reductase type 2 family. In terms of assembly, homodimer. FAD serves as cofactor.

It carries out the reaction 2 reduced [2Fe-2S]-[ferredoxin] + NADP(+) + H(+) = 2 oxidized [2Fe-2S]-[ferredoxin] + NADPH. This Streptococcus thermophilus (strain CNRZ 1066) protein is Ferredoxin--NADP reductase.